The chain runs to 271 residues: Insulin-like growth factor-binding protein 5 (271 aa).

The first 19 residues, 1 to 19 (MVISVVLLLLAACAVPAQG), serve as a signal peptide directing secretion. Residues 22 to 102 (SFVHCEPCDE…LHGRGVCLNE (81 aa)) enclose the IGFBP N-terminal domain. Intrachain disulfides connect Cys-26–Cys-52, Cys-29–Cys-54, Cys-37–Cys-55, Cys-44–Cys-58, Cys-66–Cys-79, and Cys-73–Cys-99. Residues 109–121 (TKIERDSREHEEP) show a composition bias toward basic and acidic residues. Positions 109–129 (TKIERDSREHEEPTTSEMAEE) are disordered. Ser-115 carries the phosphoserine modification. In terms of domain architecture, Thyroglobulin type-1 spans 188-262 (QGPCRRHMEA…MEYVDGDFQC (75 aa)). Intrachain disulfides connect Cys-191–Cys-218, Cys-229–Cys-240, and Cys-242–Cys-262.

In terms of assembly, interacts with IGF1; this interaction enhances the growth stimulatory effects of IGF1 on fibroblasts. Interacts with CAV1; this interaction allows trafficking of IGFBP5 from the plasma membrane to the nucleus. Interacts with NCL; this interaction is necessary for IGFBP5 localization to the nucleus. Mostly in kidney.

The protein resides in the secreted. It is found in the cytoplasm. The protein localises to the nucleus. Multifunctional protein that plays a critical role in regulating the availability of IGFs to their receptors and thereby regulates IGF-mediated cellular processes including proliferation, differentiation, and apoptosis in a cell-type specific manner. Increases the cell proliferation of osteoblasts, intestinal smooth muscle cells and neuroblastoma cells. Enhances adhesion and survival of epithelial cells but decreases adhesion of mesenchymal cells. Once secreted, acts as a major mediator of mTORC1-dependent feedback inhibition of IGF1 signaling. Also plays a role in the induction of extracellular matrix (ECM) production and deposition independently of its nuclear translocation and binding to IGFs. Acts itself as a growth factor that can act independently of IGFs to regulate bone formation. Acts as a ligand for the ROR1 receptor which triggers formation of ROR1/HER2 heterodimer to enhance CREB oncogenic signaling. In Rattus norvegicus (Rat), this protein is Insulin-like growth factor-binding protein 5 (Igfbp5).